Here is a 341-residue protein sequence, read N- to C-terminus: Spindolin (341 aa).

Residues 1-20 (MNKLILISLIASLYQVEVDA) form the signal peptide.

As to quaternary structure, homodimer; disulfide-linked.

In terms of biological role, this protein is a spindle body protein. The sequence is that of Spindolin (SPH) from Choristoneura biennis entomopoxvirus (CbEPV).